Consider the following 429-residue polypeptide: uncharacterized protein (429 aa).

Residues 1-12 are compositionally biased toward basic and acidic residues; that stretch reads MSDSKEDIRNGQ. Disordered regions lie at residues 1–63, 257–306, and 320–429; these read MSDS…APEA, RSRA…SDRM, and YRGY…SDSE. The span at 328-362 shows a compositional bias: acidic residues; sequence EENEEDDLGDFIAEEEEEEEQEEEQEEDEEDEEEV. A compositionally biased stretch (basic and acidic residues) spans 369–378; that stretch reads KGFDADKEAS.

It belongs to the LEO1 family.

Its subcellular location is the nucleus. This is an uncharacterized protein from Schizosaccharomyces pombe (strain 972 / ATCC 24843) (Fission yeast).